The chain runs to 144 residues: Large ribosomal subunit protein uL15 (144 aa).

The tract at residues 1–52 (MRLNTLSPAEGAKHAPKRVGRGIGSGLGKTAGRGHKGQNSRSGGGVRRGFEG) is disordered. A compositionally biased stretch (gly residues) spans 21–31 (RGIGSGLGKTA).

Belongs to the universal ribosomal protein uL15 family. As to quaternary structure, part of the 50S ribosomal subunit.

In terms of biological role, binds to the 23S rRNA. The sequence is that of Large ribosomal subunit protein uL15 from Yersinia pseudotuberculosis serotype O:1b (strain IP 31758).